Consider the following 446-residue polypeptide: MLKIILFLLFLTPVCFINNMYWMVQIMLFFISFIFLLMNNFMNYWSEISYFLGCDMLSYGLVLLSLWICSLMLLASESINKYNNYKNLFLLNIVILLLLLVLTFSSMSLFMFYLFFESSLIPTLFLILGWGYQPERLQAGVYLLFYTLLVSLPMLIGIFYVMNKTGSMNFYLMNNFMFNYDLLYFCLLCAFLVKMPMFLVHLWLPKAHVEAPVSGSMILAGIMLKLGGYGLLRVINFLQLMNLKYSFVWISISLVGGVLMSLVCLRQTDLKALIAYSSVAHMGIVLAGLLTMTYWGLCGSYTLMIAHGLCSSGLFCLANVSYERLGSRSMLINKGLLNFMPAMTLWWFLLSSANMAAPPTLNLLGEISLLNSIVSWSWISMIMLSFLSFFSAAYTLYLYSFSQHGKLFSGVYSFSSGKIREYLLMLLHWLPLNLLILKSESCILWL.

The next 13 membrane-spanning stretches (helical) occupy residues 4–24 (IILFLLFLTPVCFINNMYWMV), 56–76 (MLSYGLVLLSLWICSLMLLAS), 93–113 (IVILLLLLVLTFSSMSLFMFY), 114–134 (LFFESSLIPTLFLILGWGYQP), 141–161 (VYLLFYTLLVSLPMLIGIFYV), 182–202 (LLYFCLLCAFLVKMPMFLVHL), 212–232 (PVSGSMILAGIMLKLGGYGLL), 245–265 (YSFVWISISLVGGVLMSLVCL), 272–292 (ALIAYSSVAHMGIVLAGLLTM), 297–317 (LCGSYTLMIAHGLCSSGLFCL), 330–350 (MLINKGLLNFMPAMTLWWFLL), 373–393 (IVSWSWISMIMLSFLSFFSAA), and 426–446 (LLHWLPLNLLILKSESCILWL).

The protein belongs to the complex I subunit 4 family.

It is found in the mitochondrion membrane. The catalysed reaction is a ubiquinone + NADH + 5 H(+)(in) = a ubiquinol + NAD(+) + 4 H(+)(out). In terms of biological role, core subunit of the mitochondrial membrane respiratory chain NADH dehydrogenase (Complex I) that is believed to belong to the minimal assembly required for catalysis. Complex I functions in the transfer of electrons from NADH to the respiratory chain. The immediate electron acceptor for the enzyme is believed to be ubiquinone. In Drosophila yakuba (Fruit fly), this protein is NADH-ubiquinone oxidoreductase chain 4 (mt:ND4).